The chain runs to 261 residues: Leucine-rich repeat-containing protein 61 (261 aa).

3 LRR repeats span residues 54–75 (GLEW…ASLR), 76–97 (QLAV…AACE), and 98–119 (NLQC…QCLA). The LRRCT domain maps to 138-183 (NPLCASPCYWASVRELLPGLKVLDGERVSGRGSDFYQLCRDLDSSL).

This is Leucine-rich repeat-containing protein 61 (LRRC61) from Bos taurus (Bovine).